The primary structure comprises 554 residues: Glucose-6-phosphate isomerase (554 aa).

Residue Glu-359 is the Proton donor of the active site. Residues His-390 and Lys-518 contribute to the active site.

The protein belongs to the GPI family.

It localises to the cytoplasm. The catalysed reaction is alpha-D-glucose 6-phosphate = beta-D-fructose 6-phosphate. The protein operates within carbohydrate biosynthesis; gluconeogenesis. Its pathway is carbohydrate degradation; glycolysis; D-glyceraldehyde 3-phosphate and glycerone phosphate from D-glucose: step 2/4. In terms of biological role, catalyzes the reversible isomerization of glucose-6-phosphate to fructose-6-phosphate. In Pseudomonas putida (strain W619), this protein is Glucose-6-phosphate isomerase.